The primary structure comprises 138 residues: Small ribosomal subunit protein uS11c (138 aa).

The tract at residues 1–21 (MAKSIPKIGSRKTGRIGSRKH) is disordered. The span at 9 to 21 (GSRKTGRIGSRKH) shows a compositional bias: basic residues.

The protein belongs to the universal ribosomal protein uS11 family. As to quaternary structure, part of the 30S ribosomal subunit.

The protein localises to the plastid. Its subcellular location is the chloroplast. In Pisum sativum (Garden pea), this protein is Small ribosomal subunit protein uS11c.